The following is a 427-amino-acid chain: Trigger factor (427 aa).

A PPIase FKBP-type domain is found at 163–248 (GDTVVIDFVG…IHEVKAKEVP (86 aa)).

Belongs to the FKBP-type PPIase family. Tig subfamily.

The protein localises to the cytoplasm. The catalysed reaction is [protein]-peptidylproline (omega=180) = [protein]-peptidylproline (omega=0). Its function is as follows. Involved in protein export. Acts as a chaperone by maintaining the newly synthesized protein in an open conformation. Functions as a peptidyl-prolyl cis-trans isomerase. This Streptococcus pneumoniae (strain Taiwan19F-14) protein is Trigger factor.